We begin with the raw amino-acid sequence, 599 residues long: Peptidyl-Asp metalloendopeptidase (599 aa).

Positions 1–20 (MKKSLLCSTLALAVASAAQA) are cleaved as a signal peptide. Residue His164 participates in Zn(2+) binding. The active site involves Glu165. Residues His168 and His174 each contribute to the Zn(2+) site. The disordered stretch occupies residues 265–285 (PTKVPGTVNPGSGGDTPTPPD). Positions 458–583 (YDFESGIGGW…KRAELMILSG (126 aa)) constitute a CBM-cenC domain.

This sequence belongs to the peptidase M72 family. As to quaternary structure, interacts with BamI, the product of its coregulated adjacent gene, which inhibits its protease activity. The cofactor is Zn(2+). Post-translationally, made as a membrane-associated pre-pro-protein, which is exported to the periplasm with removal of the signal peptide, leading to a protein with a molecular mass of 65 kDa, that likely contains the metzincin domain plus tandem carbohydrate-binding domains. Undergoes processing during export to the extracellular milieu, probably by autocatalysis, yielding a (mature length) 25 kDa protein that most likely corresponds to the metzincin domain only.

The protein localises to the secreted. It catalyses the reaction Cleavage of Xaa-|-Asp, Xaa-|-Glu and Xaa-|-cysteic acid bonds.. Its activity is regulated as follows. Is inhibited by BamI, the product of its coregulated adjacent gene. Functionally, metalloprotease with endopeptidase activity. Specifically cleaves on the N-terminal side of aspartyl, glutamyl and cysteic acid residues. Mep72 appears to be a secreted biofilm-specific regulator that affects the processing of a very specific subset of virulence factors exported by the type III secretion machinery as well as flagellar proteins. Binds directly to ExoS and PcrV and affects the processing of these proteins in the biofilm secretome, but contrary to expectation, Mep72 seems to protect these targets against proteolytic processing/degradation. In Pseudomonas aeruginosa (strain ATCC 15692 / DSM 22644 / CIP 104116 / JCM 14847 / LMG 12228 / 1C / PRS 101 / PAO1), this protein is Peptidyl-Asp metalloendopeptidase.